A 46-amino-acid polypeptide reads, in one-letter code: Denclatoxin-B (46 aa).

3 disulfide bridges follow: Cys-3-Cys-40, Cys-4-Cys-32, and Cys-16-Cys-26.

The protein belongs to the plant thionin (TC 1.C.44) family.

It is found in the secreted. Functionally, thionins are small plant proteins which are toxic to animal cells. They seem to exert their toxic effect at the level of the cell membrane. Their precise function is not known. This Dendrophthora clavata (Columbian mistletoe) protein is Denclatoxin-B.